A 171-amino-acid polypeptide reads, in one-letter code: UPF0690 protein C1orf52 homolog A (171 aa).

2 disordered regions span residues 1 to 56 and 126 to 171; these read MAAE…GPDE and NVYQ…KRKV. The span at 47-56 shows a compositional bias: basic and acidic residues; the sequence is EAKKLPGPDE. Over residues 146 to 160 the composition is skewed to acidic residues; it reads EEEAQEDSPPSDDEQ.

This sequence belongs to the UPF0690 family.

The protein is UPF0690 protein C1orf52 homolog A of Xenopus laevis (African clawed frog).